The chain runs to 184 residues: Putative YfeABCD regulator YfeE (184 aa).

Transmembrane regions (helical) follow at residues Ile15 to Phe35, Leu84 to Leu104, and Ile162 to Ile182.

This sequence to E.coli YniB.

The protein localises to the cell membrane. Putative regulator of YfeABCD, an ABC transporter locus involved in inorganic iron transport. This is Putative YfeABCD regulator YfeE (yfeE) from Yersinia pestis.